We begin with the raw amino-acid sequence, 139 residues long: Large-conductance mechanosensitive channel (139 aa).

2 helical membrane-spanning segments follow: residues 9–29 (AFAVKGNVVDMAVGIIIGAAF) and 79–99 (IQSVIDFVIVAFAIFMGVKAI).

It belongs to the MscL family. As to quaternary structure, homopentamer.

It localises to the cell inner membrane. In terms of biological role, channel that opens in response to stretch forces in the membrane lipid bilayer. May participate in the regulation of osmotic pressure changes within the cell. This Pseudomonas fluorescens (strain SBW25) protein is Large-conductance mechanosensitive channel.